Here is a 338-residue protein sequence, read N- to C-terminus: Fructose-1,6-bisphosphatase 1 (338 aa).

Ala2 is modified (N-acetylalanine). AMP-binding positions include 18–22 (VMEEG) and 28–32 (TGEMT). The Mg(2+) site is built by Asp69 and Glu98. 113–114 (KY) lines the AMP pocket. Positions 119, 121, and 122 each coordinate Mg(2+). 122–125 (DGSS) serves as a coordination point for substrate. Position 141 (Arg141) interacts with AMP. Position 151 is an N6-succinyllysine (Lys151). Residues 213 to 216 (NEGY), 244 to 249 (RYVGSM), Tyr265, and 275 to 277 (KLR) each bind substrate. Residues Tyr216, Tyr245, and Tyr265 each carry the phosphotyrosine modification. Glu281 contacts Mg(2+).

This sequence belongs to the FBPase class 1 family. As to quaternary structure, homotetramer. The cofactor is Mg(2+).

It catalyses the reaction beta-D-fructose 1,6-bisphosphate + H2O = beta-D-fructose 6-phosphate + phosphate. The protein operates within carbohydrate biosynthesis; gluconeogenesis. Its activity is regulated as follows. Subject to complex allosteric regulation. The enzyme can assume an active R-state, or an inactive T-state. Intermediate conformations may exist. AMP acts as an allosteric inhibitor. AMP binding affects the turnover of bound substrate and not the affinity for substrate. Fructose 2,6-bisphosphate acts as a competitive inhibitor. Fructose 2,6-bisphosphate and AMP have synergistic effects. Catalyzes the hydrolysis of fructose 1,6-bisphosphate to fructose 6-phosphate in the presence of divalent cations, acting as a rate-limiting enzyme in gluconeogenesis. Plays a role in regulating glucose sensing and insulin secretion of pancreatic beta-cells. Appears to modulate glycerol gluconeogenesis in liver. Important regulator of appetite and adiposity; increased expression of the protein in liver after nutrient excess increases circulating satiety hormones and reduces appetite-stimulating neuropeptides and thus seems to provide a feedback mechanism to limit weight gain. In Oryctolagus cuniculus (Rabbit), this protein is Fructose-1,6-bisphosphatase 1 (FBP1).